A 527-amino-acid chain; its full sequence is Berberine bridge enzyme-like 8 (527 aa).

The N-terminal stretch at 1–20 (MKYALILVLFFVVFIWQSSS) is a signal peptide. Cys-31 and Cys-93 are oxidised to a cystine. 2 N-linked (GlcNAc...) asparagine glycosylation sites follow: Asn-51 and Asn-68. Residues 71 to 247 (STPKPFLIIA…LAYKINLVEV (177 aa)) enclose the FAD-binding PCMH-type domain. A cross-link (6-(S-cysteinyl)-8alpha-(pros-histidyl)-FAD (His-Cys)) is located at residues 108–172 (HDYDGLSYVT…KTLAYPAGIC (65 aa)). Asn-250, Asn-263, and Asn-292 each carry an N-linked (GlcNAc...) asparagine glycan.

The protein belongs to the oxygen-dependent FAD-linked oxidoreductase family. FAD is required as a cofactor. The FAD cofactor is bound via a bicovalent 6-S-cysteinyl, 8alpha-N1-histidyl FAD linkage.

It is found in the secreted. The protein resides in the cell wall. The sequence is that of Berberine bridge enzyme-like 8 from Arabidopsis thaliana (Mouse-ear cress).